Consider the following 514-residue polypeptide: Uridylate cyclase (514 aa).

Guanylate cyclase domains are found at residues 49–190 and 286–428; these read VHMY…AKLA and VSLY…EKRQ. Residues Y52, R105, F178, 184–188, and 291–296 contribute to the a ribonucleoside 5'-triphosphate site; these read NHAAK and DIDGFT. Ca(2+)-binding residues include D291, I292, and D339. Residue D291 coordinates Mn(2+). A disordered region spans residues 495–514; sequence IRADERQVQPHSRQKVDGSR. A compositionally biased stretch (basic and acidic residues) spans 496-514; the sequence is RADERQVQPHSRQKVDGSR.

Belongs to the adenylyl cyclase class-4/guanylyl cyclase family. Pyrimidine cyclase subfamily. Monomer. A divalent metal cation serves as cofactor.

The protein resides in the cytoplasm. It carries out the reaction UTP = 3',5'-cyclic UMP + diphosphate. In terms of biological role, pycsar (pyrimidine cyclase system for antiphage resistance) provides immunity against bacteriophage. The pyrimidine cyclase (PycC) synthesizes cyclic nucleotides in response to infection; these serve as specific second messenger signals. The signals activate the adjacent effector, leading to bacterial cell death and abortive phage infection. A clade A Pycsar system. The pyrimidine cyclase gene of a two-gene Pycsar system, generates cyclic UMP (cUMP) from UTP, has little to no activity on ATP, CTP or GTP. Expression of this and adjacent effector PaPycTIR (AC P0DV41) probably confers resistance to bacteriophage. The genes are probably only expressed in response to bacteriophage infection. Does not have adenylyl or guanylyl cyclase activity. The protein is Uridylate cyclase of Pseudomonas aeruginosa.